The primary structure comprises 1489 residues: Sex-determining transformer protein 2 (1489 aa).

Residues 1 to 33 (MKLAFNKLLVASVVFTVLSFGLLLASLFTTTAT) form the signal peptide. Transmembrane regions (helical) follow at residues 454–474 (MIYF…AFAF), 489–509 (GFIT…ILID), 513–533 (LCYI…VTFI), 600–620 (YWFL…FFID), 622–642 (DVQK…FEEM), 749–769 (AVVV…LLFI), 931–951 (IFAA…FSIG), 958–978 (LAFA…VSLF), 986–1006 (YTNV…CDLA), 1041–1061 (VQIF…TAII), and 1066–1086 (AFFI…FNSL). Residues 1138 to 1288 (EFSIRPTENT…EQQEVTDDVA (151 aa)) are interaction with fem-3. 3 disordered regions span residues 1143–1176 (PTEN…DPSM), 1233–1393 (LLRQ…YPPS), and 1412–1489 (RNLP…TPGL). Composition is skewed to basic and acidic residues over residues 1275–1298 (DPAK…EVRK), 1326–1340 (VSRE…REPR), and 1423–1433 (RPRDWDQRRLV). Residues 1402 to 1423 (CEDVYWKYNERNLPDNVPMPPR) form an MX regulatory domain; required for tra-1 binding region. Residues 1444 to 1456 (VPPPGRSAIPIPP) show a composition bias toward pro residues. Basic and acidic residues predominate over residues 1460-1482 (RLRERRREQHLREQEARRNRPES).

As to quaternary structure, interacts with tra-1 and fem-3.

The protein resides in the membrane. Plays a major role in controlling sexual cell fates. Promotes female development in XX animals where it sequesters one or more of the FEM proteins to the membrane thereby freeing the tra-1 protein (a putative transcription factor) to enter the nucleus and promote female development. In XO animals it acts as a receptor for her-1 which prevents it from binding to FEM proteins thereby repressing the activity of tra-1. Negatively regulates male development when bound to fem-3 and is required together with tra-1 for promoting spermatogenesis. Also required for feminizing tra-3 activity. The protein is Sex-determining transformer protein 2 of Caenorhabditis briggsae.